We begin with the raw amino-acid sequence, 651 residues long: Acetyl-coenzyme A synthetase (651 aa).

Residues 191-194 (RGGK), threonine 311, and asparagine 335 each bind CoA. ATP is bound by residues 387-389 (GEP), 411-416 (DTWWQT), aspartate 500, and arginine 515. Position 523 (serine 523) interacts with CoA. Residue arginine 526 participates in ATP binding. Mg(2+)-binding residues include valine 537, histidine 539, and valine 542. CoA is bound at residue arginine 584. An N6-acetyllysine modification is found at lysine 609.

It belongs to the ATP-dependent AMP-binding enzyme family. Requires Mg(2+) as cofactor. Post-translationally, acetylated. Deacetylation by the SIR2-homolog deacetylase activates the enzyme.

It catalyses the reaction acetate + ATP + CoA = acetyl-CoA + AMP + diphosphate. In terms of biological role, catalyzes the conversion of acetate into acetyl-CoA (AcCoA), an essential intermediate at the junction of anabolic and catabolic pathways. AcsA undergoes a two-step reaction. In the first half reaction, AcsA combines acetate with ATP to form acetyl-adenylate (AcAMP) intermediate. In the second half reaction, it can then transfer the acetyl group from AcAMP to the sulfhydryl group of CoA, forming the product AcCoA. The sequence is that of Acetyl-coenzyme A synthetase from Pseudomonas syringae pv. tomato (strain ATCC BAA-871 / DC3000).